The primary structure comprises 387 residues: Phosphoglycerate kinase (387 aa).

Residues 21-23 (DLN), Arg36, 59-62 (HLGR), Arg113, and Arg146 each bind substrate. ATP is bound by residues Lys197, Glu314, and 340-343 (GGDT).

This sequence belongs to the phosphoglycerate kinase family. In terms of assembly, monomer.

It is found in the cytoplasm. The catalysed reaction is (2R)-3-phosphoglycerate + ATP = (2R)-3-phospho-glyceroyl phosphate + ADP. The protein operates within carbohydrate degradation; glycolysis; pyruvate from D-glyceraldehyde 3-phosphate: step 2/5. In Pectobacterium atrosepticum (strain SCRI 1043 / ATCC BAA-672) (Erwinia carotovora subsp. atroseptica), this protein is Phosphoglycerate kinase.